Here is a 793-residue protein sequence, read N- to C-terminus: Coiled-coil domain-containing protein 175 (793 aa).

5 coiled-coil regions span residues 131–163 (EINT…NEAL), 205–377 (KRED…VLSE), 431–535 (KTVY…MLMK), 562–679 (LPQL…KYRE), and 716–745 (LVDN…QHVS).

The chain is Coiled-coil domain-containing protein 175 (CCDC175) from Homo sapiens (Human).